The following is a 267-amino-acid chain: Stomatin-3 (267 aa).

The chain crosses the membrane as a helical span at residues 17–37 (FVALICAWAFLLLTFPVSIFF).

This sequence belongs to the band 7/mec-2 family.

Its subcellular location is the membrane. This is Stomatin-3 (sto-3) from Caenorhabditis elegans.